Consider the following 288-residue polypeptide: Probable proteasome subunit alpha type-7 (288 aa).

Residue Thr2 is modified to N-acetylthreonine. The interval 247–288 (INGDDDEDEDDSDNVMSSDDENAPVATNANATTDQEGDIHLE) is disordered. Over residues 249–268 (GDDDEDEDDSDNVMSSDDEN) the composition is skewed to acidic residues. The span at 269-279 (APVATNANATT) shows a compositional bias: low complexity.

Belongs to the peptidase T1A family. As to quaternary structure, the 26S proteasome consists of a 20S proteasome core and two 19S regulatory subunits. The 20S proteasome core is composed of 28 subunits that are arranged in four stacked rings, resulting in a barrel-shaped structure. The two end rings are each formed by seven alpha subunits, and the two central rings are each formed by seven beta subunits. The catalytic chamber with the active sites is on the inside of the barrel. The alpha and beta forms are probably products of the same gene with different post-translational modifications.

Its subcellular location is the cytoplasm. The protein localises to the nucleus. The proteasome degrades poly-ubiquitinated proteins in the cytoplasm and in the nucleus. It is essential for the regulated turnover of proteins and for the removal of misfolded proteins. The proteasome is a multicatalytic proteinase complex that is characterized by its ability to cleave peptides with Arg, Phe, Tyr, Leu, and Glu adjacent to the leaving group at neutral or slightly basic pH. It has an ATP-dependent proteolytic activity. The chain is Probable proteasome subunit alpha type-7 (PRE10) from Saccharomyces cerevisiae (strain ATCC 204508 / S288c) (Baker's yeast).